The sequence spans 311 residues: Methionyl-tRNA formyltransferase (311 aa).

110–113 (SLLP) lines the (6S)-5,6,7,8-tetrahydrofolate pocket.

This sequence belongs to the Fmt family.

The catalysed reaction is L-methionyl-tRNA(fMet) + (6R)-10-formyltetrahydrofolate = N-formyl-L-methionyl-tRNA(fMet) + (6S)-5,6,7,8-tetrahydrofolate + H(+). In terms of biological role, attaches a formyl group to the free amino group of methionyl-tRNA(fMet). The formyl group appears to play a dual role in the initiator identity of N-formylmethionyl-tRNA by promoting its recognition by IF2 and preventing the misappropriation of this tRNA by the elongation apparatus. This is Methionyl-tRNA formyltransferase from Streptococcus mutans serotype c (strain ATCC 700610 / UA159).